A 594-amino-acid polypeptide reads, in one-letter code: Zinc finger protein 467 (594 aa).

The segment at 1–86 is disordered; the sequence is MRETLEALNS…PQKAEPAGSV (86 aa). Residues 1-183 are interaction with STAT3; that stretch reads MRETLEALNS…TLRLHQRLHR (183 aa). Positions 31–47 are enriched in polar residues; it reads SNAQEKMSSRGESTLHS. The span at 54–64 shows a compositional bias: basic and acidic residues; it reads PGQKEGIHTEQ. A Glycyl lysine isopeptide (Lys-Gly) (interchain with G-Cter in SUMO2) cross-link involves residue K97. C2H2-type zinc fingers lie at residues 160 to 182, 188 to 210, 216 to 238, 244 to 266, 272 to 294, 300 to 322, 355 to 377, 430 to 452, 458 to 480, 486 to 508, 514 to 536, and 542 to 564; these read YGCE…QRLH, CACP…QRSH, FPCS…LRTH, YPCA…QKTH, FPCT…QRIH, YQCT…QRVH, FACS…QSLH, FFCP…RRVH, FACA…SRAH, FACA…QAVH, HACA…QAIH, and FSCP…QRIH. The tract at residues 313–351 is disordered; sequence QHLVRHQRVHDAASRTRSSPDIPVAPHSPTASLTPSPPG. Residue K368 forms a Glycyl lysine isopeptide (Lys-Gly) (interchain with G-Cter in SUMO2) linkage.

Belongs to the krueppel C2H2-type zinc-finger protein family. Interacts with STAT3. Enhances STAT3 activity by keeping it in the nucleus.

It is found in the nucleus. Its function is as follows. Transcription factor that promotes adipocyte differentiation and suppresses osteoblast differentiation in the bone marrow. Enhances the osteoclast-supporting ability of stromal cells. Binds with STAT3 the consensus sequence 5'-CTTCTGGGAAGA-3' of the acute phase response element (APRE). Transactivates several promoters including FOS, OSM and PPARG. Recruits a histone deacetylase complex. The polypeptide is Zinc finger protein 467 (Znf467) (Mus musculus (Mouse)).